The chain runs to 329 residues: Peroxidase 51 (329 aa).

The first 25 residues, 1-25 (MVVMNKTNLLLLILSLFLAINLSSA), serve as a signal peptide directing secretion. 4 cysteine pairs are disulfide-bonded: cysteine 36/cysteine 119, cysteine 69/cysteine 74, cysteine 125/cysteine 325, and cysteine 204/cysteine 236. The active-site Proton acceptor is the histidine 67. 5 residues coordinate Ca(2+): aspartate 68, valine 71, glycine 73, aspartate 75, and serine 77. Proline 167 is a binding site for substrate. Residue histidine 197 coordinates heme b. Residue threonine 198 coordinates Ca(2+). Asparagine 215 is a glycosylation site (N-linked (GlcNAc...) asparagine). Ca(2+) is bound by residues aspartate 249, threonine 252, and aspartate 257.

Belongs to the peroxidase family. Classical plant (class III) peroxidase subfamily. It depends on heme b as a cofactor. Ca(2+) serves as cofactor.

It localises to the secreted. It catalyses the reaction 2 a phenolic donor + H2O2 = 2 a phenolic radical donor + 2 H2O. Functionally, removal of H(2)O(2), oxidation of toxic reductants, biosynthesis and degradation of lignin, suberization, auxin catabolism, response to environmental stresses such as wounding, pathogen attack and oxidative stress. These functions might be dependent on each isozyme/isoform in each plant tissue. This chain is Peroxidase 51 (PER51), found in Arabidopsis thaliana (Mouse-ear cress).